We begin with the raw amino-acid sequence, 330 residues long: tRNA-modifying protein YgfZ (330 aa).

Folate-binding residues include tryptophan 28 and tryptophan 190.

The protein belongs to the tRNA-modifying YgfZ family.

The protein resides in the cytoplasm. In terms of biological role, folate-binding protein involved in regulating the level of ATP-DnaA and in the modification of some tRNAs. It is probably a key factor in regulatory networks that act via tRNA modification, such as initiation of chromosomal replication. The polypeptide is tRNA-modifying protein YgfZ (Serratia proteamaculans (strain 568)).